A 448-amino-acid chain; its full sequence is Glutamyl-tRNA reductase (448 aa).

Residues T49 to R52, S109, E114 to Q116, and Q120 each bind substrate. The active-site Nucleophile is the C50. NADP(+) is bound at residue G189 to S194.

The protein belongs to the glutamyl-tRNA reductase family. In terms of assembly, homodimer.

It carries out the reaction (S)-4-amino-5-oxopentanoate + tRNA(Glu) + NADP(+) = L-glutamyl-tRNA(Glu) + NADPH + H(+). It functions in the pathway porphyrin-containing compound metabolism; protoporphyrin-IX biosynthesis; 5-aminolevulinate from L-glutamyl-tRNA(Glu): step 1/2. Its function is as follows. Catalyzes the NADPH-dependent reduction of glutamyl-tRNA(Glu) to glutamate 1-semialdehyde (GSA). This Staphylococcus aureus (strain NCTC 8325 / PS 47) protein is Glutamyl-tRNA reductase.